The sequence spans 284 residues: Pantothenate synthetase (284 aa).

30–37 (MGNLHDGH) contacts ATP. Histidine 37 acts as the Proton donor in catalysis. Glutamine 61 provides a ligand contact to (R)-pantoate. Glutamine 61 serves as a coordination point for beta-alanine. ATP is bound at residue 149-152 (GEKD). Glutamine 155 contacts (R)-pantoate. ATP contacts are provided by residues valine 178 and 186-189 (LSSR).

The protein belongs to the pantothenate synthetase family. In terms of assembly, homodimer.

Its subcellular location is the cytoplasm. The enzyme catalyses (R)-pantoate + beta-alanine + ATP = (R)-pantothenate + AMP + diphosphate + H(+). The protein operates within cofactor biosynthesis; (R)-pantothenate biosynthesis; (R)-pantothenate from (R)-pantoate and beta-alanine: step 1/1. Its function is as follows. Catalyzes the condensation of pantoate with beta-alanine in an ATP-dependent reaction via a pantoyl-adenylate intermediate. In Photorhabdus laumondii subsp. laumondii (strain DSM 15139 / CIP 105565 / TT01) (Photorhabdus luminescens subsp. laumondii), this protein is Pantothenate synthetase.